The chain runs to 284 residues: Bifunctional protein FolD (284 aa).

166–168 (GAS) contributes to the NADP(+) binding site.

Belongs to the tetrahydrofolate dehydrogenase/cyclohydrolase family. As to quaternary structure, homodimer.

The enzyme catalyses (6R)-5,10-methylene-5,6,7,8-tetrahydrofolate + NADP(+) = (6R)-5,10-methenyltetrahydrofolate + NADPH. It carries out the reaction (6R)-5,10-methenyltetrahydrofolate + H2O = (6R)-10-formyltetrahydrofolate + H(+). It participates in one-carbon metabolism; tetrahydrofolate interconversion. Functionally, catalyzes the oxidation of 5,10-methylenetetrahydrofolate to 5,10-methenyltetrahydrofolate and then the hydrolysis of 5,10-methenyltetrahydrofolate to 10-formyltetrahydrofolate. This chain is Bifunctional protein FolD, found in Nitrosococcus oceani (strain ATCC 19707 / BCRC 17464 / JCM 30415 / NCIMB 11848 / C-107).